The chain runs to 324 residues: Casein kinase I (324 aa).

The Protein kinase domain maps to 9 to 278; the sequence is YALGKKLGSG…LRRLLKDLFI (270 aa). Residues 15–23 and K38 contribute to the ATP site; that span reads LGSGSFGDI. Residue D128 is the Proton acceptor of the active site.

This sequence belongs to the protein kinase superfamily. CK1 Ser/Thr protein kinase family. Casein kinase I subfamily. Interacts with rhoptry protein RON3; the interaction is direct. Interacts with CK2alpha; the interaction is direct. Interacts with nucleosome assembly protein NAPL. Interacts with RAB5b. Interacts with host GAPVD1. Interacts with host SNX22. Mg(2+) serves as cofactor.

The protein resides in the cytoplasm. It is found in the cytoplasmic vesicle. The protein localises to the secretory vesicle. It localises to the microneme. Its subcellular location is the secreted. The protein resides in the host cell surface. It catalyses the reaction L-seryl-[protein] + ATP = O-phospho-L-seryl-[protein] + ADP + H(+). It carries out the reaction L-threonyl-[protein] + ATP = O-phospho-L-threonyl-[protein] + ADP + H(+). Its function is as follows. Serine/threonine-protein kinase likely to be involved in many cellular processes. Phosphorylates rhoptry protein RON3, nucleosome assembly protein NAPL and DNA/RNA-binding protein ALBA4 in vitro. In Plasmodium falciparum (isolate Dd2), this protein is Casein kinase I.